The following is a 240-amino-acid chain: Ribonuclease PH (240 aa).

Phosphate contacts are provided by residues Arg87 and 125 to 127 (GTR).

The protein belongs to the RNase PH family. In terms of assembly, homohexameric ring arranged as a trimer of dimers.

It carries out the reaction tRNA(n+1) + phosphate = tRNA(n) + a ribonucleoside 5'-diphosphate. Phosphorolytic 3'-5' exoribonuclease that plays an important role in tRNA 3'-end maturation. Removes nucleotide residues following the 3'-CCA terminus of tRNAs; can also add nucleotides to the ends of RNA molecules by using nucleoside diphosphates as substrates, but this may not be physiologically important. Probably plays a role in initiation of 16S rRNA degradation (leading to ribosome degradation) during starvation. This chain is Ribonuclease PH, found in Pseudomonas syringae pv. tomato (strain ATCC BAA-871 / DC3000).